The following is a 117-amino-acid chain: MTRAKSGKISKNRHKKILKLAKGYRGRASTCFRVAIEKVEKGLQYAYRDRRNRKRDFRGLWIQRINAAVREHGLVYSQFMGALKKAEIDIDRKVLAELAVNNNEEFASIVEQAKAHI.

This sequence belongs to the bacterial ribosomal protein bL20 family.

In terms of biological role, binds directly to 23S ribosomal RNA and is necessary for the in vitro assembly process of the 50S ribosomal subunit. It is not involved in the protein synthesizing functions of that subunit. The chain is Large ribosomal subunit protein bL20 from Rickettsia bellii (strain OSU 85-389).